The chain runs to 164 residues: Methyl-coenzyme M reductase I operon protein D (164 aa).

As to quaternary structure, MCR is composed of three subunits: alpha, beta, and gamma. The function of proteins C and D is not known.

The protein is Methyl-coenzyme M reductase I operon protein D (mcrD) of Methanocaldococcus jannaschii (strain ATCC 43067 / DSM 2661 / JAL-1 / JCM 10045 / NBRC 100440) (Methanococcus jannaschii).